The following is a 32-amino-acid chain: ISGTSMSCPHVAGRAYVLDTSLRVYLLDTGLR.

The Peptidase S8 domain occupies 1-32 (ISGTSMSCPHVAGRAYVLDTSLRVYLLDTGLR). The active-site Charge relay system is S5.

This sequence belongs to the peptidase S8 family.

With respect to regulation, inhibited by PMSF. Not inhibited by benzamidine, aprotinin, SBTI, EDTA, EGTA, 2-mercaptoethanol, iodoacetic acid or pepstatin A. Functionally, serine protease. Has fibrinolytic and fibrinogenolytic but no plasminogenolytic activity. Cleaves after Arg and Lys residues. Cleaves fibrinogen alpha chain, beta chain and gamma chain in that order. In Hediste japonica (Polychaete worm), this protein is Fibrinolytic enzyme 2.